Consider the following 438-residue polypeptide: Trigger factor (438 aa).

The PPIase FKBP-type domain occupies 170–255 (GDTVVIDFDG…IHELKKLETP (86 aa)).

This sequence belongs to the FKBP-type PPIase family. Tig subfamily.

Its subcellular location is the cytoplasm. The enzyme catalyses [protein]-peptidylproline (omega=180) = [protein]-peptidylproline (omega=0). Involved in protein export. Acts as a chaperone by maintaining the newly synthesized protein in an open conformation. Functions as a peptidyl-prolyl cis-trans isomerase. The sequence is that of Trigger factor (tig) from Oenococcus oeni (Leuconostoc oenos).